The sequence spans 317 residues: Ribosomal protein L11 methyltransferase (317 aa).

S-adenosyl-L-methionine is bound by residues Thr158, Gly179, Asp201, and Asn244.

Belongs to the methyltransferase superfamily. PrmA family.

The protein resides in the cytoplasm. It catalyses the reaction L-lysyl-[protein] + 3 S-adenosyl-L-methionine = N(6),N(6),N(6)-trimethyl-L-lysyl-[protein] + 3 S-adenosyl-L-homocysteine + 3 H(+). Its function is as follows. Methylates ribosomal protein L11. This is Ribosomal protein L11 methyltransferase from Streptococcus pyogenes serotype M18 (strain MGAS8232).